The following is a 303-amino-acid chain: UDP-3-O-acyl-N-acetylglucosamine deacetylase (303 aa).

Residues His78, His237, and Asp241 each contribute to the Zn(2+) site. His264 (proton donor) is an active-site residue.

This sequence belongs to the LpxC family. Requires Zn(2+) as cofactor.

It catalyses the reaction a UDP-3-O-[(3R)-3-hydroxyacyl]-N-acetyl-alpha-D-glucosamine + H2O = a UDP-3-O-[(3R)-3-hydroxyacyl]-alpha-D-glucosamine + acetate. It participates in glycolipid biosynthesis; lipid IV(A) biosynthesis; lipid IV(A) from (3R)-3-hydroxytetradecanoyl-[acyl-carrier-protein] and UDP-N-acetyl-alpha-D-glucosamine: step 2/6. Catalyzes the hydrolysis of UDP-3-O-myristoyl-N-acetylglucosamine to form UDP-3-O-myristoylglucosamine and acetate, the committed step in lipid A biosynthesis. This is UDP-3-O-acyl-N-acetylglucosamine deacetylase from Pseudomonas savastanoi pv. phaseolicola (strain 1448A / Race 6) (Pseudomonas syringae pv. phaseolicola (strain 1448A / Race 6)).